Reading from the N-terminus, the 476-residue chain is Growth arrest-specific protein 7 (476 aa).

Residues 1 to 62 (MSGARCRTLY…PASYVQLLEK (62 aa)) enclose the SH3 domain. Residues 77–110 (VILPPGWQSYLSPQGRRYYVNTTTNETTWERPSS) form the WW domain. A disordered region spans residues 100-171 (TNETTWERPS…SSPSKKQSKE (72 aa)). A compositionally biased stretch (low complexity) spans 108–120 (PSSSPGIPASPGS). Phosphoserine is present on residues S117 and S163. The span at 150-171 (RKSTGDSQNLGSSSPSKKQSKE) shows a compositional bias: polar residues. An F-BAR domain is found at 196-456 (TEWSYCDYFW…LLRKVDPAKD (261 aa)). Residues 309 to 419 (ENFKKDMKKC…RLEVERVEMI (111 aa)) are a coiled coil.

It is found in the cytoplasm. Functionally, may play a role in promoting maturation and morphological differentiation of cerebellar neurons. The polypeptide is Growth arrest-specific protein 7 (GAS7) (Homo sapiens (Human)).